Consider the following 168-residue polypeptide: Peptidoglycan-associated lipoprotein (168 aa).

Residues 1–21 (MEMLKFGKFAALALAMAVAVG) form the signal peptide. The N-palmitoyl cysteine moiety is linked to residue Cys-22. Cys-22 is lipidated: S-diacylglycerol cysteine. Residues 56 to 168 (SDEAALRAIT…AQNRRVELKK (113 aa)) enclose the OmpA-like domain. The tract at residues 147–168 (RPVATGHDEQSWAQNRRVELKK) is disordered.

The protein belongs to the Pal lipoprotein family. As to quaternary structure, the Tol-Pal system is composed of five core proteins: the inner membrane proteins TolA, TolQ and TolR, the periplasmic protein TolB and the outer membrane protein Pal. They form a network linking the inner and outer membranes and the peptidoglycan layer.

It is found in the cell outer membrane. Its function is as follows. Part of the Tol-Pal system, which plays a role in outer membrane invagination during cell division and is important for maintaining outer membrane integrity. The chain is Peptidoglycan-associated lipoprotein from Pseudomonas aeruginosa (strain ATCC 15692 / DSM 22644 / CIP 104116 / JCM 14847 / LMG 12228 / 1C / PRS 101 / PAO1).